A 132-amino-acid chain; its full sequence is Large ribosomal subunit protein uL14 (132 aa).

This sequence belongs to the universal ribosomal protein uL14 family. In terms of assembly, part of the 50S ribosomal subunit. Forms a cluster with proteins L3 and L24e, part of which may contact the 16S rRNA in 2 intersubunit bridges.

Its function is as follows. Binds to 23S rRNA. Forms part of two intersubunit bridges in the 70S ribosome. In Methanococcus maripaludis (strain C5 / ATCC BAA-1333), this protein is Large ribosomal subunit protein uL14.